Reading from the N-terminus, the 123-residue chain is UPF0102 protein APP7_1414 (123 aa).

Belongs to the UPF0102 family.

The polypeptide is UPF0102 protein APP7_1414 (Actinobacillus pleuropneumoniae serotype 7 (strain AP76)).